The following is a 432-amino-acid chain: PC-esterase domain-containing protein 1B (432 aa).

2 disordered regions span residues 273–312 (WESS…SPGL) and 407–432 (GPYM…SRPQ). Polar residues predominate over residues 285-294 (QDNIGPQFAQ). Over residues 296–312 (PPYPFPRPPPLLPSPGL) the composition is skewed to pro residues.

The protein belongs to the PC-esterase family.

This is PC-esterase domain-containing protein 1B (Pced1b) from Rattus norvegicus (Rat).